The following is a 279-amino-acid chain: Oxygen-dependent coproporphyrinogen-III oxidase (279 aa).

Ser102 lines the substrate pocket. His106 and His116 together coordinate a divalent metal cation. His116 functions as the Proton donor in the catalytic mechanism. 118–120 (NTR) is a substrate binding site. Positions 149 and 179 each coordinate a divalent metal cation. An important for dimerization region spans residues 244–279 (YVEFNLLYDRGTKFGLMTDGNVEAILMSLPPEVKFN).

It belongs to the aerobic coproporphyrinogen-III oxidase family. As to quaternary structure, homodimer. Requires a divalent metal cation as cofactor.

Its subcellular location is the cytoplasm. It catalyses the reaction coproporphyrinogen III + O2 + 2 H(+) = protoporphyrinogen IX + 2 CO2 + 2 H2O. It participates in porphyrin-containing compound metabolism; protoporphyrin-IX biosynthesis; protoporphyrinogen-IX from coproporphyrinogen-III (O2 route): step 1/1. Its function is as follows. Involved in the heme biosynthesis. Catalyzes the aerobic oxidative decarboxylation of propionate groups of rings A and B of coproporphyrinogen-III to yield the vinyl groups in protoporphyrinogen-IX. This chain is Oxygen-dependent coproporphyrinogen-III oxidase, found in Rickettsia felis (strain ATCC VR-1525 / URRWXCal2) (Rickettsia azadi).